The primary structure comprises 226 residues: Cytidylate kinase (226 aa).

10-18 serves as a coordination point for ATP; sequence GPASSGKST.

This sequence belongs to the cytidylate kinase family. Type 1 subfamily.

It is found in the cytoplasm. It catalyses the reaction CMP + ATP = CDP + ADP. The enzyme catalyses dCMP + ATP = dCDP + ADP. The sequence is that of Cytidylate kinase from Streptococcus pyogenes serotype M1.